Here is a 381-residue protein sequence, read N- to C-terminus: MFVSIPNIRKAVVSLSVVPLLAACAFAPGMRFDPQRPLDPADNASVPKITPITPDLVRAGQTQAQVQASHENADVGPLLAKATPYRIGTGDILSIVVWDHPELVFPTQTYSIGSTYDLASFGGAPSVSGYVVSTGGDIQFPYAGVIKVAGKTQNEVRDEISRGIARVVKDPQVTVRVLAYRSQRVYVDGEVKTPGQQSIDDVPMTLVEALNRAGGINTTTGDNSRIRLTRGGKQWTLSMPALMQQGIDPANILLRGGDIVRVEQREDSKVFVTGEVVRPSTVLPRNGRLTLSEALGEAGGVSPVSSDPRNVYVIRRAAEGEPQVYHLDAKSPVALALAEGFELKPKDVVYVDAGSLVRWSRVINLLVPTATPLIGAAAVAK.

The signal sequence occupies residues 1–23; sequence MFVSIPNIRKAVVSLSVVPLLAA. Cys24 carries N-palmitoyl cysteine lipidation. Cys24 carries the S-diacylglycerol cysteine lipid modification.

The protein belongs to the BexD/CtrA/VexA family.

The protein resides in the cell outer membrane. Functionally, probably involved in polymerization and/or export of exopolysaccharide EPS I which functions as a virulence factor. The chain is EPS I polysaccharide export outer membrane protein EpsA (epsA) from Ralstonia nicotianae (strain ATCC BAA-1114 / GMI1000) (Ralstonia solanacearum).